A 163-amino-acid chain; its full sequence is Protein-export protein SecB (163 aa).

It belongs to the SecB family. In terms of assembly, homotetramer, a dimer of dimers. One homotetramer interacts with 1 SecA dimer.

The protein localises to the cytoplasm. In terms of biological role, one of the proteins required for the normal export of preproteins out of the cell cytoplasm. It is a molecular chaperone that binds to a subset of precursor proteins, maintaining them in a translocation-competent state. It also specifically binds to its receptor SecA. The polypeptide is Protein-export protein SecB (Brucella anthropi (strain ATCC 49188 / DSM 6882 / CCUG 24695 / JCM 21032 / LMG 3331 / NBRC 15819 / NCTC 12168 / Alc 37) (Ochrobactrum anthropi)).